We begin with the raw amino-acid sequence, 224 residues long: 7-cyano-7-deazaguanine synthase (224 aa).

8 to 18 provides a ligand contact to ATP; sequence LSGGMDSAAVI. Cys186, Cys196, Cys199, and Cys202 together coordinate Zn(2+).

It belongs to the QueC family. The cofactor is Zn(2+).

It catalyses the reaction 7-carboxy-7-deazaguanine + NH4(+) + ATP = 7-cyano-7-deazaguanine + ADP + phosphate + H2O + H(+). Its pathway is purine metabolism; 7-cyano-7-deazaguanine biosynthesis. Its function is as follows. Catalyzes the ATP-dependent conversion of 7-carboxy-7-deazaguanine (CDG) to 7-cyano-7-deazaguanine (preQ(0)). This is 7-cyano-7-deazaguanine synthase from Xanthomonas axonopodis pv. citri (strain 306).